Reading from the N-terminus, the 276-residue chain is Dermonecrotic toxin LlSicTox-alphaIV3 (276 aa).

His-5 is an active-site residue. Mg(2+) is bound by residues Glu-25 and Asp-27. The active-site Nucleophile is the His-41. Cystine bridges form between Cys-45/Cys-51 and Cys-47/Cys-192. A Mg(2+)-binding site is contributed by Asp-85.

The protein belongs to the arthropod phospholipase D family. Class II subfamily. Mg(2+) serves as cofactor. Expressed by the venom gland.

It is found in the secreted. It catalyses the reaction an N-(acyl)-sphingosylphosphocholine = an N-(acyl)-sphingosyl-1,3-cyclic phosphate + choline. The enzyme catalyses an N-(acyl)-sphingosylphosphoethanolamine = an N-(acyl)-sphingosyl-1,3-cyclic phosphate + ethanolamine. The catalysed reaction is a 1-acyl-sn-glycero-3-phosphocholine = a 1-acyl-sn-glycero-2,3-cyclic phosphate + choline. It carries out the reaction a 1-acyl-sn-glycero-3-phosphoethanolamine = a 1-acyl-sn-glycero-2,3-cyclic phosphate + ethanolamine. Dermonecrotic toxins cleave the phosphodiester linkage between the phosphate and headgroup of certain phospholipids (sphingolipid and lysolipid substrates), forming an alcohol (often choline) and a cyclic phosphate. This toxin acts on sphingomyelin (SM). It may also act on ceramide phosphoethanolamine (CPE), lysophosphatidylcholine (LPC) and lysophosphatidylethanolamine (LPE), but not on lysophosphatidylserine (LPS), and lysophosphatidylglycerol (LPG). It acts by transphosphatidylation, releasing exclusively cyclic phosphate products as second products. Induces dermonecrosis, hemolysis, increased vascular permeability, edema, inflammatory response, and platelet aggregation. This Loxosceles laeta (South American recluse spider) protein is Dermonecrotic toxin LlSicTox-alphaIV3.